A 537-amino-acid polypeptide reads, in one-letter code: Glutamyl-tRNA(Gln) amidotransferase subunit A, chloroplastic/mitochondrial (537 aa).

Residues Lys116 and Ser191 each act as charge relay system in the active site. Catalysis depends on Ser215, which acts as the Acyl-ester intermediate.

It belongs to the amidase family. GatA subfamily. As to quaternary structure, subunit of the heterotrimeric GatCAB amidotransferase (AdT) complex, composed of A, B and C subunits.

It is found in the mitochondrion. The protein localises to the plastid. It localises to the chloroplast stroma. The enzyme catalyses L-glutamyl-tRNA(Gln) + L-glutamine + ATP + H2O = L-glutaminyl-tRNA(Gln) + L-glutamate + ADP + phosphate + H(+). Allows the formation of correctly charged Gln-tRNA(Gln) through the transamidation of misacylated Glu-tRNA(Gln) in chloroplasts and mitochondria. The reaction takes place in the presence of glutamine and ATP through an activated gamma-phospho-Glu-tRNA(Gln). This Arabidopsis thaliana (Mouse-ear cress) protein is Glutamyl-tRNA(Gln) amidotransferase subunit A, chloroplastic/mitochondrial.